The primary structure comprises 107 residues: Translation initiation factor IF-1, chloroplastic (107 aa).

One can recognise an S1-like domain in the interval 8-83 (REKKNPREAK…SKGRIIYRLP (76 aa)). The segment at 81–107 (RLPHKDSKRTEDSKDTEDLKDTKDSKG) is disordered. The segment covering 83 to 107 (PHKDSKRTEDSKDTEDLKDTKDSKG) has biased composition (basic and acidic residues).

Belongs to the IF-1 family. As to quaternary structure, component of the 30S ribosomal translation pre-initiation complex which assembles on the 30S ribosome in the order IF-2 and IF-3, IF-1 and N-formylmethionyl-tRNA(fMet); mRNA recruitment can occur at any time during PIC assembly.

It is found in the plastid. Its subcellular location is the chloroplast. One of the essential components for the initiation of protein synthesis. Stabilizes the binding of IF-2 and IF-3 on the 30S subunit to which N-formylmethionyl-tRNA(fMet) subsequently binds. Helps modulate mRNA selection, yielding the 30S pre-initiation complex (PIC). Upon addition of the 50S ribosomal subunit IF-1, IF-2 and IF-3 are released leaving the mature 70S translation initiation complex. The polypeptide is Translation initiation factor IF-1, chloroplastic (Oryza sativa subsp. indica (Rice)).